A 185-amino-acid polypeptide reads, in one-letter code: Pyruvate/ketoisovalerate oxidoreductases common subunit gamma (185 aa).

In terms of assembly, heterotetramer of one alpha, one beta, one delta and one gamma chain.

The catalysed reaction is 2 oxidized [2Fe-2S]-[ferredoxin] + pyruvate + CoA = 2 reduced [2Fe-2S]-[ferredoxin] + acetyl-CoA + CO2 + H(+). The enzyme catalyses 3-methyl-2-oxobutanoate + 2 oxidized [2Fe-2S]-[ferredoxin] + CoA = 2-methylpropanoyl-CoA + 2 reduced [2Fe-2S]-[ferredoxin] + CO2 + H(+). The chain is Pyruvate/ketoisovalerate oxidoreductases common subunit gamma (porG) from Pyrococcus abyssi (strain GE5 / Orsay).